Here is a 428-residue protein sequence, read N- to C-terminus: Glutamate-1-semialdehyde 2,1-aminomutase (428 aa).

At Lys-267 the chain carries N6-(pyridoxal phosphate)lysine.

The protein belongs to the class-III pyridoxal-phosphate-dependent aminotransferase family. HemL subfamily. As to quaternary structure, homodimer. Requires pyridoxal 5'-phosphate as cofactor.

The protein localises to the cytoplasm. The enzyme catalyses (S)-4-amino-5-oxopentanoate = 5-aminolevulinate. Its pathway is porphyrin-containing compound metabolism; protoporphyrin-IX biosynthesis; 5-aminolevulinate from L-glutamyl-tRNA(Glu): step 2/2. The sequence is that of Glutamate-1-semialdehyde 2,1-aminomutase from Pelobacter propionicus (strain DSM 2379 / NBRC 103807 / OttBd1).